The sequence spans 194 residues: Naphthalene 1,2-dioxygenase system, small oxygenase component (194 aa).

It belongs to the bacterial ring-hydroxylating dioxygenase beta subunit family. The naphthalene dioxygenase (NDO) multicomponent enzyme system is composed of an electron transfer component and a dioxygenase component (iron sulfur protein (ISP)). The electron transfer component is composed of a ferredoxin reductase (NagAa) and a ferredoxin (NagAb), and the dioxygenase component is formed by a large alpha subunit (NagAc) and a small beta subunit (NagAd).

It participates in aromatic compound metabolism; naphthalene degradation. Functionally, component of the naphthalene dioxygenase (NDO) multicomponent enzyme system which catalyzes the incorporation of both atoms of molecular oxygen into naphthalene to form cis-(1R,2S)-dihydroxy-1,2-dihydronaphthalene. Also able to use styrene as substrate. The beta subunit seems to have a structural role in the holoenzyme. This Ralstonia sp protein is Naphthalene 1,2-dioxygenase system, small oxygenase component.